The primary structure comprises 175 residues: MSRRNVAKKREVSADRKYNSKIVAKFINHVMKKGKRALAEKIVYGAMEKAEKQLGVPAMDVLTGVLANISPAVELRSFRAGGVNYRIPVPIKEERSRFIAFGWLLSEARKRKGMCSRDRIALELLEAHSGHGGAFRKFEENVKVAESGRAFSHFRFFNTGGARRSNPSNNIGGNR.

The protein belongs to the universal ribosomal protein uS7 family. Part of the 30S ribosomal subunit. Contacts proteins S9 and S11.

Its function is as follows. One of the primary rRNA binding proteins, it binds directly to 16S rRNA where it nucleates assembly of the head domain of the 30S subunit. Is located at the subunit interface close to the decoding center, probably blocks exit of the E-site tRNA. The polypeptide is Small ribosomal subunit protein uS7 (Neorickettsia sennetsu (strain ATCC VR-367 / Miyayama) (Ehrlichia sennetsu)).